The chain runs to 150 residues: 3-dehydroquinate dehydratase (150 aa).

Tyr-26 acts as the Proton acceptor in catalysis. The substrate site is built by Asn-77, His-83, and Asp-90. Catalysis depends on His-103, which acts as the Proton donor. Residues 104 to 105 and Arg-114 each bind substrate; that span reads LS.

Belongs to the type-II 3-dehydroquinase family. In terms of assembly, homododecamer.

The catalysed reaction is 3-dehydroquinate = 3-dehydroshikimate + H2O. It functions in the pathway metabolic intermediate biosynthesis; chorismate biosynthesis; chorismate from D-erythrose 4-phosphate and phosphoenolpyruvate: step 3/7. Catalyzes a trans-dehydration via an enolate intermediate. This Yersinia enterocolitica serotype O:8 / biotype 1B (strain NCTC 13174 / 8081) protein is 3-dehydroquinate dehydratase.